The following is a 172-amino-acid chain: NADH-ubiquinone oxidoreductase chain 6 (172 aa).

The next 5 helical transmembrane spans lie at 1–21, 27–47, 48–68, 87–107, and 138–158; these read MTYF…AVAS, YGVV…LSLG, ISFV…VVFV, VVGY…VGGF, and CGVG…FVVL.

The protein belongs to the complex I subunit 6 family.

The protein localises to the mitochondrion membrane. It catalyses the reaction a ubiquinone + NADH + 5 H(+)(in) = a ubiquinol + NAD(+) + 4 H(+)(out). Core subunit of the mitochondrial membrane respiratory chain NADH dehydrogenase (Complex I) that is believed to belong to the minimal assembly required for catalysis. Complex I functions in the transfer of electrons from NADH to the respiratory chain. The immediate electron acceptor for the enzyme is believed to be ubiquinone. This chain is NADH-ubiquinone oxidoreductase chain 6 (MT-ND6), found in Uria aalge (Common mure).